Here is a 276-residue protein sequence, read N- to C-terminus: Large ribosomal subunit protein uL2 (276 aa).

Residues 218–276 (PYVRGSAMNPVDHPHGGGEGRAPIGRPAPSTPWGKPALGLKTRKKNKKSNKYIVRRRKK) are disordered. Basic residues predominate over residues 258–276 (KTRKKNKKSNKYIVRRRKK).

The protein belongs to the universal ribosomal protein uL2 family. Part of the 50S ribosomal subunit. Forms a bridge to the 30S subunit in the 70S ribosome.

In terms of biological role, one of the primary rRNA binding proteins. Required for association of the 30S and 50S subunits to form the 70S ribosome, for tRNA binding and peptide bond formation. It has been suggested to have peptidyltransferase activity; this is somewhat controversial. Makes several contacts with the 16S rRNA in the 70S ribosome. In Finegoldia magna (strain ATCC 29328 / DSM 20472 / WAL 2508) (Peptostreptococcus magnus), this protein is Large ribosomal subunit protein uL2.